The primary structure comprises 961 residues: Aconitate hydratase A (961 aa).

Cysteine 499, cysteine 565, and cysteine 568 together coordinate [4Fe-4S] cluster.

This sequence belongs to the aconitase/IPM isomerase family. As to quaternary structure, monomer. It depends on [4Fe-4S] cluster as a cofactor.

The catalysed reaction is citrate = D-threo-isocitrate. It catalyses the reaction (2S,3R)-3-hydroxybutane-1,2,3-tricarboxylate = 2-methyl-cis-aconitate + H2O. Its pathway is carbohydrate metabolism; tricarboxylic acid cycle; isocitrate from oxaloacetate: step 2/2. It participates in organic acid metabolism; propanoate degradation. Functionally, involved in the catabolism of short chain fatty acids (SCFA) via the tricarboxylic acid (TCA)(acetyl degradation route) and probably via the 2-methylcitrate cycle I (propionate degradation route). Catalyzes the reversible isomerization of citrate to isocitrate via cis-aconitate. The apo form of AcnA functions as a RNA-binding regulatory protein. Could catalyze the hydration of 2-methyl-cis-aconitate to yield (2R,3S)-2-methylisocitrate. This is Aconitate hydratase A (acn) from Mycobacterium avium.